Consider the following 290-residue polypeptide: UPF0761 membrane protein ASA_4118 (290 aa).

Helical transmembrane passes span 48 to 68, 104 to 124, 144 to 164, 182 to 202, 216 to 236, and 250 to 270; these read LLSLVPMIAVVFGMMSAFPVF, NTTAVGIGALIVVALMLISAI, FAMYWMILTLGPVLIGGSIAI, IGYLLLRSLPFLFSVLTFLLV, AFIGALVAATLFELAKRGFAI, and ALATIPVLFVWVYLSWLVVLL.

The protein belongs to the UPF0761 family.

The protein localises to the cell inner membrane. This is UPF0761 membrane protein ASA_4118 from Aeromonas salmonicida (strain A449).